The sequence spans 494 residues: UPF0371 protein Sez_1293 (494 aa).

Belongs to the UPF0371 family.

The chain is UPF0371 protein Sez_1293 from Streptococcus equi subsp. zooepidemicus (strain MGCS10565).